A 486-amino-acid polypeptide reads, in one-letter code: Recombining binding protein suppressor of hairless (486 aa).

2 DNA-binding regions span residues 43–53 (QKSYGNEKRFF) and 151–156 (SKPSKK). Lys-161 carries the post-translational modification N6-acetyllysine. The DNA-binding stretch occupies residues 178 to 183 (RLRSQT). The IPT/TIG domain occupies 341–431 (PVVESLQLNG…YSTSLTFTYT (91 aa)). Residues 451-467 (SSQVPPNESNTNSEGSY) show a composition bias toward polar residues. The interval 451–486 (SSQVPPNESNTNSEGSYTNASTNSTSVTSSTATVVS) is disordered. Residues 468 to 486 (TNASTNSTSVTSSTATVVS) are compositionally biased toward low complexity.

Belongs to the Su(H) family. In terms of assembly, interacts with activated NOTCH1, NOTCH2 or NOTCH3. Interacts with MINT/SHARP. This interaction may mediate the recruitment of large corepressor complexes containing proteins such as HDAC1, HDAC2, NCOR2, SAP30, FHL1/KYOT2 and CIR1. Interacts with EP300, MAML1 and PTF1A. Interacts with RITA1, leading to nuclear export, prevent the interaction between RBPJ and NICD product and subsequent down-regulation of the Notch signaling pathway. Interacts with SNW1. Interacts with CHCHD2 and CXXC5. Interacts with BEND6 (via BEN domain). Interacts with NKAPL. Interacts with ZMIZ1. Interacts with RBM15. Interacts with L3MBTL3 and KDM1A; the interaction with KDM1A is weaker in the absence of L3MBTL3 and the interaction with L3MBTL3 is impaired by Notch-derived peptides containing the intracellular domain (NICD).

The protein resides in the nucleus. It localises to the cytoplasm. In terms of biological role, transcriptional regulator that plays a central role in Notch signaling, a signaling pathway involved in cell-cell communication that regulates a broad spectrum of cell-fate determinations. Acts as a transcriptional repressor when it is not associated with Notch proteins. When associated with some NICD product of Notch proteins (Notch intracellular domain), it acts as a transcriptional activator that activates transcription of Notch target genes. Probably represses or activates transcription via the recruitment of chromatin remodeling complexes containing histone deacetylase or histone acetylase proteins, respectively. Specifically binds to the immunoglobulin kappa-type J segment recombination signal sequence. Binds specifically to methylated DNA. Binds to the oxygen responsive element of COX4I2 and activates its transcription under hypoxia conditions (4% oxygen). Negatively regulates the phagocyte oxidative burst in response to bacterial infection by repressing transcription of NADPH oxidase subunits. The polypeptide is Recombining binding protein suppressor of hairless (RBPJ) (Pongo abelii (Sumatran orangutan)).